The primary structure comprises 100 residues: Small ribosomal subunit protein uS14 (100 aa).

Belongs to the universal ribosomal protein uS14 family. In terms of assembly, part of the 30S ribosomal subunit. Contacts proteins S3 and S10.

In terms of biological role, binds 16S rRNA, required for the assembly of 30S particles and may also be responsible for determining the conformation of the 16S rRNA at the A site. This is Small ribosomal subunit protein uS14 from Prochlorococcus marinus (strain MIT 9313).